A 223-amino-acid polypeptide reads, in one-letter code: 2-C-methyl-D-erythritol 4-phosphate cytidylyltransferase (223 aa).

This sequence belongs to the IspD/TarI cytidylyltransferase family. IspD subfamily.

It catalyses the reaction 2-C-methyl-D-erythritol 4-phosphate + CTP + H(+) = 4-CDP-2-C-methyl-D-erythritol + diphosphate. It participates in isoprenoid biosynthesis; isopentenyl diphosphate biosynthesis via DXP pathway; isopentenyl diphosphate from 1-deoxy-D-xylulose 5-phosphate: step 2/6. Catalyzes the formation of 4-diphosphocytidyl-2-C-methyl-D-erythritol from CTP and 2-C-methyl-D-erythritol 4-phosphate (MEP). This is 2-C-methyl-D-erythritol 4-phosphate cytidylyltransferase from Synechococcus sp. (strain WH7803).